We begin with the raw amino-acid sequence, 235 residues long: Transcription factor hepR (235 aa).

Residues 14–45 are disordered; it reads QNSPESSRDVLSMASPGLLPIDPSPEHDETNK. Residues 175-205 form a C2H2-type zinc finger; that stretch reads IQCPCLDERGERCSRMFSRLDNMRDHVRRIH.

The protein localises to the nucleus. In terms of biological role, transcription factor; part of the gene cluster that mediates the biosynthesis of heptelidic acid (HA), a sesquiterpene lactone that acts as an inhibitor of glyceraldehyde-3-phosphatedehydrogenase (GAPDH) and a growth inhibitor of the salt-tolerant lactic acid bacteria in soy sauce brewing. Both hepR and hepS regulate the transcription of the heptelidic acid cluster, but they are not involved in mutual transcriptional regulation and act with different mechanisms. In Aspergillus oryzae (strain ATCC 42149 / RIB 40) (Yellow koji mold), this protein is Transcription factor hepR.